Consider the following 462-residue polypeptide: NAD-capped RNA hydrolase NUDT12 (462 aa).

ANK repeat units lie at residues 11–40 (EIVT…SLLN), 45–74 (NGWT…DRSI), and 78–98 (SRQT…ANLL). An N6-succinyllysine modification is found at lysine 185. Zn(2+) contacts are provided by cysteine 284 and cysteine 287. Lysine 292 is subject to N6-succinyllysine. Cysteine 302 and cysteine 307 together coordinate Zn(2+). Residues tyrosine 318, 354–356 (AGF), glutamate 370, glutamate 374, and glutamate 415 contribute to the substrate site. Positions 319-453 (PRVDPVVIMQ…SRAIAHQLIK (135 aa)) constitute a Nudix hydrolase domain. Alanine 354, glutamate 370, glutamate 374, and glutamate 415 together coordinate Mg(2+). The Nudix box motif lies at 355–376 (GFIEPGETIEDAVRREVEEESG). Residues 460-462 (PNL) carry the Microbody targeting signal motif.

It belongs to the Nudix hydrolase family. NudC subfamily. Homodimer. Homodimerization is essential for its catalytic activity and protein stability. Interacts (via ANK repeats) with BLMH. The cofactor is Mg(2+). It depends on Zn(2+) as a cofactor.

The protein resides in the cytoplasm. The protein localises to the peroxisome. Its subcellular location is the cytoplasmic granule. It catalyses the reaction a 5'-end NAD(+)-phospho-ribonucleoside in mRNA + H2O = a 5'-end phospho-adenosine-phospho-ribonucleoside in mRNA + beta-nicotinamide D-ribonucleotide + 2 H(+). It carries out the reaction NAD(+) + H2O = beta-nicotinamide D-ribonucleotide + AMP + 2 H(+). The catalysed reaction is NADH + H2O = reduced beta-nicotinamide D-ribonucleotide + AMP + 2 H(+). The enzyme catalyses NADPH + H2O = reduced beta-nicotinamide D-ribonucleotide + adenosine 2',5'-bisphosphate + 2 H(+). Functionally, mRNA decapping enzyme that specifically removes the nicotinamide adenine dinucleotide (NAD) cap from a subset of mRNAs by hydrolyzing the diphosphate linkage to produce nicotinamide mononucleotide (NMN) and 5' monophosphate mRNA. The NAD-cap is present at the 5'-end of some RNAs; in contrast to the canonical N7 methylguanosine (m7G) cap, the NAD cap promotes mRNA decay. Preferentially acts on NAD-capped transcripts in response to nutrient stress. Also acts on free nicotinamide adenine dinucleotide molecules: hydrolyzes NAD(H) into NMN(H) and AMP, and NADPH into NMNH and 2',5'-ADP. May act to regulate the concentration of peroxisomal nicotinamide nucleotide cofactors required for oxidative metabolism in this organelle. Regulates the levels of circadian clock components PER1, PER2, PER3 and CRY2 in the liver. The polypeptide is NAD-capped RNA hydrolase NUDT12 (Pongo abelii (Sumatran orangutan)).